The sequence spans 171 residues: Crossover junction endodeoxyribonuclease RuvC (171 aa).

Catalysis depends on residues Asp-11, Glu-71, and Asp-143. The Mg(2+) site is built by Asp-11, Glu-71, and Asp-143.

This sequence belongs to the RuvC family. As to quaternary structure, homodimer which binds Holliday junction (HJ) DNA. The HJ becomes 2-fold symmetrical on binding to RuvC with unstacked arms; it has a different conformation from HJ DNA in complex with RuvA. In the full resolvosome a probable DNA-RuvA(4)-RuvB(12)-RuvC(2) complex forms which resolves the HJ. Mg(2+) serves as cofactor.

It localises to the cytoplasm. The enzyme catalyses Endonucleolytic cleavage at a junction such as a reciprocal single-stranded crossover between two homologous DNA duplexes (Holliday junction).. Functionally, the RuvA-RuvB-RuvC complex processes Holliday junction (HJ) DNA during genetic recombination and DNA repair. Endonuclease that resolves HJ intermediates. Cleaves cruciform DNA by making single-stranded nicks across the HJ at symmetrical positions within the homologous arms, yielding a 5'-phosphate and a 3'-hydroxyl group; requires a central core of homology in the junction. The consensus cleavage sequence is 5'-(A/T)TT(C/G)-3'. Cleavage occurs on the 3'-side of the TT dinucleotide at the point of strand exchange. HJ branch migration catalyzed by RuvA-RuvB allows RuvC to scan DNA until it finds its consensus sequence, where it cleaves and resolves the cruciform DNA. The polypeptide is Crossover junction endodeoxyribonuclease RuvC (Bartonella tribocorum (strain CIP 105476 / IBS 506)).